We begin with the raw amino-acid sequence, 288 residues long: Polyamine aminopropyltransferase (288 aa).

The PABS domain maps to 9-238; sequence ETLHDQFGQY…GIMTFAWATD (230 aa). An S-methyl-5'-thioadenosine-binding site is contributed by Gln33. Spermidine-binding residues include His64 and Asp88. S-methyl-5'-thioadenosine-binding positions include Glu108 and 140-141; that span reads DG. The Proton acceptor role is filled by Asp158. 158–161 lines the spermidine pocket; it reads DCTD. Pro165 lines the S-methyl-5'-thioadenosine pocket.

The protein belongs to the spermidine/spermine synthase family. In terms of assembly, homodimer or homotetramer.

It is found in the cytoplasm. The catalysed reaction is S-adenosyl 3-(methylsulfanyl)propylamine + putrescine = S-methyl-5'-thioadenosine + spermidine + H(+). It functions in the pathway amine and polyamine biosynthesis; spermidine biosynthesis; spermidine from putrescine: step 1/1. In terms of biological role, catalyzes the irreversible transfer of a propylamine group from the amino donor S-adenosylmethioninamine (decarboxy-AdoMet) to putrescine (1,4-diaminobutane) to yield spermidine. In Escherichia coli O17:K52:H18 (strain UMN026 / ExPEC), this protein is Polyamine aminopropyltransferase.